A 147-amino-acid chain; its full sequence is Phosphoribosyl-AMP cyclohydrolase (147 aa).

Aspartate 91 contacts Mg(2+). Zn(2+) is bound at residue cysteine 92. 2 residues coordinate Mg(2+): aspartate 93 and aspartate 95. Zn(2+) is bound by residues cysteine 109 and cysteine 116.

The protein belongs to the PRA-CH family. As to quaternary structure, homodimer. Mg(2+) is required as a cofactor. Zn(2+) serves as cofactor.

The protein resides in the cytoplasm. The enzyme catalyses 1-(5-phospho-beta-D-ribosyl)-5'-AMP + H2O = 1-(5-phospho-beta-D-ribosyl)-5-[(5-phospho-beta-D-ribosylamino)methylideneamino]imidazole-4-carboxamide. It participates in amino-acid biosynthesis; L-histidine biosynthesis; L-histidine from 5-phospho-alpha-D-ribose 1-diphosphate: step 3/9. Functionally, catalyzes the hydrolysis of the adenine ring of phosphoribosyl-AMP. In Rhodopseudomonas palustris (strain BisA53), this protein is Phosphoribosyl-AMP cyclohydrolase.